The chain runs to 1586 residues: Pentafunctional AROM polypeptide (1586 aa).

The interval 1–384 is 3-dehydroquinate synthase; the sequence is MSEPTKISIL…HEPKASVVSN (384 aa). Residues 44–46, 81–84, 114–116, and Asp119 contribute to the NAD(+) site; these read DTN, ESSK, and GGV. Arg130 contributes to the 7-phospho-2-dehydro-3-deoxy-D-arabino-heptonate binding site. 139-140 contacts NAD(+); the sequence is TT. Asp146 and Lys152 together coordinate 7-phospho-2-dehydro-3-deoxy-D-arabino-heptonate. Lys161 is a binding site for NAD(+). Asn162 contacts 7-phospho-2-dehydro-3-deoxy-D-arabino-heptonate. NAD(+) contacts are provided by residues 179–182 and Asn190; that span reads FLET. Residue Glu194 coordinates Zn(2+). 7-phospho-2-dehydro-3-deoxy-D-arabino-heptonate is bound by residues 194–197 and Lys250; that span reads EVIK. Glu260 (proton acceptor; for 3-dehydroquinate synthase activity) is an active-site residue. Residues 264-268 and His271 contribute to the 7-phospho-2-dehydro-3-deoxy-D-arabino-heptonate site; that span reads RNLLN. A Zn(2+)-binding site is contributed by His271. The active-site Proton acceptor; for 3-dehydroquinate synthase activity is the His275. The 7-phospho-2-dehydro-3-deoxy-D-arabino-heptonate site is built by His287 and Lys356. His287 is a Zn(2+) binding site. The EPSP synthase stretch occupies residues 397–842; the sequence is VHPGVPKSLN…WDALKQMFSV (446 aa). The active-site For EPSP synthase activity is the Cys824. A shikimate kinase region spans residues 864-1056; sequence SASVFIIGMR…KKKKHSFFVS (193 aa). Residue 871 to 878 participates in ATP binding; sequence GMRGAGKT. Positions 1057–1277 are 3-dehydroquinase; sequence LTLPDVEPSG…AAPGQLSAAE (221 aa). Residue His1180 is the Proton acceptor; for 3-dehydroquinate dehydratase activity of the active site. Lys1208 functions as the Schiff-base intermediate with substrate; for 3-dehydroquinate dehydratase activity in the catalytic mechanism. The tract at residues 1290–1586 is shikimate dehydrogenase; that stretch reads AQKFAIFGSP…SKHLDYFLSF (297 aa).

It in the N-terminal section; belongs to the sugar phosphate cyclases superfamily. Dehydroquinate synthase family. The protein in the 2nd section; belongs to the EPSP synthase family. This sequence in the 3rd section; belongs to the shikimate kinase family. In the 4th section; belongs to the type-I 3-dehydroquinase family. It in the C-terminal section; belongs to the shikimate dehydrogenase family. In terms of assembly, homodimer. The cofactor is Zn(2+).

It localises to the cytoplasm. It catalyses the reaction 7-phospho-2-dehydro-3-deoxy-D-arabino-heptonate = 3-dehydroquinate + phosphate. The catalysed reaction is 3-dehydroquinate = 3-dehydroshikimate + H2O. It carries out the reaction shikimate + NADP(+) = 3-dehydroshikimate + NADPH + H(+). The enzyme catalyses shikimate + ATP = 3-phosphoshikimate + ADP + H(+). It catalyses the reaction 3-phosphoshikimate + phosphoenolpyruvate = 5-O-(1-carboxyvinyl)-3-phosphoshikimate + phosphate. Its pathway is metabolic intermediate biosynthesis; chorismate biosynthesis; chorismate from D-erythrose 4-phosphate and phosphoenolpyruvate: step 2/7. The protein operates within metabolic intermediate biosynthesis; chorismate biosynthesis; chorismate from D-erythrose 4-phosphate and phosphoenolpyruvate: step 3/7. It functions in the pathway metabolic intermediate biosynthesis; chorismate biosynthesis; chorismate from D-erythrose 4-phosphate and phosphoenolpyruvate: step 4/7. It participates in metabolic intermediate biosynthesis; chorismate biosynthesis; chorismate from D-erythrose 4-phosphate and phosphoenolpyruvate: step 5/7. Its pathway is metabolic intermediate biosynthesis; chorismate biosynthesis; chorismate from D-erythrose 4-phosphate and phosphoenolpyruvate: step 6/7. Its function is as follows. The AROM polypeptide catalyzes 5 consecutive enzymatic reactions in prechorismate polyaromatic amino acid biosynthesis. The protein is Pentafunctional AROM polypeptide of Penicillium rubens (strain ATCC 28089 / DSM 1075 / NRRL 1951 / Wisconsin 54-1255) (Penicillium chrysogenum).